The primary structure comprises 1171 residues: Myosin-B/C (1171 aa).

In terms of domain architecture, Myosin motor spans 105–780; sequence ETVDDIGYLP…AAKELSILQR (676 aa). 199-206 serves as a coordination point for ATP; it reads GESGAGKT. Positions 671-681 are actin-binding; sequence AHFIRCLKPNE. A tail region spans residues 810–1171; the sequence is IHFLTRLESN…CFEACAPDRP (362 aa).

The protein belongs to the TRAFAC class myosin-kinesin ATPase superfamily. Myosin family.

Its subcellular location is the cytoplasm. Functionally, myosins are actin-based motor molecules with ATPase activity. Unconventional myosins serve in intracellular movements. Their highly divergent tails are presumed to bind to membranous compartments, which would be moved relative to actin filaments. Plays a role in proper daughter cell budding and separation. The chain is Myosin-B/C from Toxoplasma gondii.